We begin with the raw amino-acid sequence, 294 residues long: Halotolerance protein HAL1 (294 aa).

Residues 115 to 153 (LKRGTKEQEDINSSTSKKSAVINNFSGEKTPNPRPQSSN) are disordered. Positions 125–153 (INSSTSKKSAVINNFSGEKTPNPRPQSSN) are enriched in polar residues. Ser266 carries the post-translational modification Phosphoserine.

Its subcellular location is the cytoplasm. Functionally, involved in salt tolerance. The polypeptide is Halotolerance protein HAL1 (HAL1) (Saccharomyces cerevisiae (strain ATCC 204508 / S288c) (Baker's yeast)).